A 320-amino-acid chain; its full sequence is Lipoyl synthase (320 aa).

[4Fe-4S] cluster contacts are provided by Cys-67, Cys-72, Cys-78, Cys-93, Cys-97, Cys-100, and Ser-307. The Radical SAM core domain maps to 79 to 296 (FNHGTATFMI…RDKAQAMGFE (218 aa)).

It belongs to the radical SAM superfamily. Lipoyl synthase family. [4Fe-4S] cluster is required as a cofactor.

Its subcellular location is the cytoplasm. The enzyme catalyses [[Fe-S] cluster scaffold protein carrying a second [4Fe-4S](2+) cluster] + N(6)-octanoyl-L-lysyl-[protein] + 2 oxidized [2Fe-2S]-[ferredoxin] + 2 S-adenosyl-L-methionine + 4 H(+) = [[Fe-S] cluster scaffold protein] + N(6)-[(R)-dihydrolipoyl]-L-lysyl-[protein] + 4 Fe(3+) + 2 hydrogen sulfide + 2 5'-deoxyadenosine + 2 L-methionine + 2 reduced [2Fe-2S]-[ferredoxin]. It participates in protein modification; protein lipoylation via endogenous pathway; protein N(6)-(lipoyl)lysine from octanoyl-[acyl-carrier-protein]: step 2/2. Its function is as follows. Catalyzes the radical-mediated insertion of two sulfur atoms into the C-6 and C-8 positions of the octanoyl moiety bound to the lipoyl domains of lipoate-dependent enzymes, thereby converting the octanoylated domains into lipoylated derivatives. The sequence is that of Lipoyl synthase from Pasteurella multocida (strain Pm70).